Consider the following 434-residue polypeptide: ATP-dependent RNA helicase RhlB (434 aa).

Positions 9–37 match the Q motif motif; sequence KKFADFPLKPEILAALNENGFEFCTPIQA. Positions 40–219 constitute a Helicase ATP-binding domain; sequence LPILLNAKDI…YDHMNDPEKV (180 aa). 53-60 lines the ATP pocket; that stretch reads AQTGTGKT. Positions 165 to 168 match the DEAD box motif; sequence DEAD. One can recognise a Helicase C-terminal domain in the interval 243–390; the sequence is KMRLLLSLIE…VSNYDKDALL (148 aa). A disordered region spans residues 390–434; the sequence is LDDIPPPARIHRKPPTSRTRDGGSKGAHRSGGNTSRPPRHRTRRP.

It belongs to the DEAD box helicase family. RhlB subfamily. As to quaternary structure, component of the RNA degradosome, which is a multiprotein complex involved in RNA processing and mRNA degradation.

The protein resides in the cytoplasm. It carries out the reaction ATP + H2O = ADP + phosphate + H(+). Its function is as follows. DEAD-box RNA helicase involved in RNA degradation. Has RNA-dependent ATPase activity and unwinds double-stranded RNA. This chain is ATP-dependent RNA helicase RhlB, found in Shewanella frigidimarina (strain NCIMB 400).